The chain runs to 178 residues: GPI mannosyltransferase 2 subunit C167.09 (178 aa).

The N-terminal stretch at 1–20 (MREFRLIFVLLFFLPSFAIA) is a signal peptide. Residues 21 to 152 (NTEIINVETG…LGFLPKSVLP (132 aa)) are Lumenal-facing. N-linked (GlcNAc...) asparagine glycans are attached at residues Asn-48, Asn-49, Asn-106, Asn-115, and Asn-122. The helical transmembrane segment at 153–173 (IVGFVFVIILIALICMTNLFI) threads the bilayer. At 174–178 (KHKRD) the chain is on the cytoplasmic side.

In terms of assembly, part of the GPI mannosyltransferase 2 complex composed of gpi18 and C167.09.

It localises to the endoplasmic reticulum membrane. It functions in the pathway glycolipid biosynthesis; glycosylphosphatidylinositol-anchor biosynthesis. Functionally, essential component of the GPI mannosyltransferase 2 complex. Responsible for the transfer of the second mannose to the glycosylphosphatidylinositol during GPI precursor assembly. The polypeptide is GPI mannosyltransferase 2 subunit C167.09 (Schizosaccharomyces pombe (strain 972 / ATCC 24843) (Fission yeast)).